We begin with the raw amino-acid sequence, 156 residues long: Transcription elongation factor GreA (156 aa).

Residues 7-27 (MTQEGLDKLKLELENLKLVKR) adopt a coiled-coil conformation.

It belongs to the GreA/GreB family.

In terms of biological role, necessary for efficient RNA polymerase transcription elongation past template-encoded arresting sites. The arresting sites in DNA have the property of trapping a certain fraction of elongating RNA polymerases that pass through, resulting in locked ternary complexes. Cleavage of the nascent transcript by cleavage factors such as GreA or GreB allows the resumption of elongation from the new 3'terminus. GreA releases sequences of 2 to 3 nucleotides. In Lactococcus lactis subsp. lactis (strain IL1403) (Streptococcus lactis), this protein is Transcription elongation factor GreA.